Consider the following 153-residue polypeptide: Neuromedin-S (153 aa).

Residues 1–26 (MKHLRPQFPLILAIYCFCMLQIPSSG) form the signal peptide. Propeptides lie at residues 27 to 69 (FPQP…IYKR), 70 to 105 (FLFH…ANRR), and 106 to 108 (MKR). Asn141 is subject to Asparagine amide. The propeptide occupies 144 to 153 (NIEDEAQIQW).

This sequence belongs to the NmU family.

The protein resides in the secreted. Functionally, implicated in the regulation of circadian rhythms through autocrine and/or paracrine actions. This is Neuromedin-S (NMS) from Homo sapiens (Human).